The following is a 373-amino-acid chain: D-alanine--D-alanine ligase (373 aa).

The ATP-grasp domain occupies 165-369; sequence KRLAREAGIP…FGDLVSALIA (205 aa). Residue 192 to 247 participates in ATP binding; it reads KERLGLPVFVKPARGGSSIGISKVDSWEEFDAAIDLAFSNDNKVIVEAMIHGAEVE. Residues D324, E336, and N338 each coordinate Mg(2+).

It belongs to the D-alanine--D-alanine ligase family. Requires Mg(2+) as cofactor. The cofactor is Mn(2+).

Its subcellular location is the cytoplasm. The catalysed reaction is 2 D-alanine + ATP = D-alanyl-D-alanine + ADP + phosphate + H(+). It participates in cell wall biogenesis; peptidoglycan biosynthesis. Functionally, cell wall formation. This Corynebacterium jeikeium (strain K411) protein is D-alanine--D-alanine ligase.